A 397-amino-acid polypeptide reads, in one-letter code: Elongation factor Tu (397 aa).

The tr-type G domain maps to 10–206 (KPHVNIGTIG…AVDEYIPTPE (197 aa)). Residues 19–26 (GHIDHGKT) are G1. 19-26 (GHIDHGKT) is a binding site for GTP. Threonine 26 is a binding site for Mg(2+). The tract at residues 62–66 (GITIS) is G2. Residues 83 to 86 (DCPG) form a G3 region. Residues 83–87 (DCPGH) and 138–141 (NKCD) contribute to the GTP site. Residues 138-141 (NKCD) are G4. The G5 stretch occupies residues 176-178 (AAF).

It belongs to the TRAFAC class translation factor GTPase superfamily. Classic translation factor GTPase family. EF-Tu/EF-1A subfamily. In terms of assembly, monomer.

The protein localises to the cytoplasm. The enzyme catalyses GTP + H2O = GDP + phosphate + H(+). GTP hydrolase that promotes the GTP-dependent binding of aminoacyl-tRNA to the A-site of ribosomes during protein biosynthesis. The protein is Elongation factor Tu of Nocardioides sp. (strain ATCC BAA-499 / JS614).